Reading from the N-terminus, the 407-residue chain is Argininosuccinate synthase (407 aa).

ATP contacts are provided by residues 12–20 and Ala39; that span reads AYSGGLDTS. Residues Tyr92 and Ser97 each contribute to the L-citrulline site. Gly122 contributes to the ATP binding site. Residues Thr124, Asn128, and Asp129 each contribute to the L-aspartate site. Asn128 lines the L-citrulline pocket. Residues Arg132, Ser182, Ser191, Glu267, and Tyr279 each contribute to the L-citrulline site.

This sequence belongs to the argininosuccinate synthase family. Type 1 subfamily. As to quaternary structure, homotetramer.

The protein resides in the cytoplasm. The catalysed reaction is L-citrulline + L-aspartate + ATP = 2-(N(omega)-L-arginino)succinate + AMP + diphosphate + H(+). It participates in amino-acid biosynthesis; L-arginine biosynthesis; L-arginine from L-ornithine and carbamoyl phosphate: step 2/3. The protein is Argininosuccinate synthase of Campylobacter fetus subsp. fetus (strain 82-40).